The primary structure comprises 341 residues: Probable dual-specificity RNA methyltransferase RlmN (341 aa).

The Proton acceptor role is filled by E88. Positions E94–R314 constitute a Radical SAM core domain. C101 and C325 are joined by a disulfide. C108, C112, and C115 together coordinate [4Fe-4S] cluster. Residues G153–E154, S185, S206–H208, and H282 contribute to the S-adenosyl-L-methionine site. C325 serves as the catalytic S-methylcysteine intermediate.

The protein belongs to the radical SAM superfamily. RlmN family. It depends on [4Fe-4S] cluster as a cofactor.

It is found in the cytoplasm. The enzyme catalyses adenosine(2503) in 23S rRNA + 2 reduced [2Fe-2S]-[ferredoxin] + 2 S-adenosyl-L-methionine = 2-methyladenosine(2503) in 23S rRNA + 5'-deoxyadenosine + L-methionine + 2 oxidized [2Fe-2S]-[ferredoxin] + S-adenosyl-L-homocysteine. The catalysed reaction is adenosine(37) in tRNA + 2 reduced [2Fe-2S]-[ferredoxin] + 2 S-adenosyl-L-methionine = 2-methyladenosine(37) in tRNA + 5'-deoxyadenosine + L-methionine + 2 oxidized [2Fe-2S]-[ferredoxin] + S-adenosyl-L-homocysteine. Its function is as follows. Specifically methylates position 2 of adenine 2503 in 23S rRNA and position 2 of adenine 37 in tRNAs. In Porphyromonas gingivalis (strain ATCC BAA-308 / W83), this protein is Probable dual-specificity RNA methyltransferase RlmN.